A 203-amino-acid polypeptide reads, in one-letter code: Inactive ribonuclease-like protein 9 (203 aa).

Positions 1–25 (MRTPITTHSLLLLLLLQQLLQPVQL) are cleaved as a signal peptide. Intrachain disulfides connect Cys-96/Cys-151, Cys-114/Cys-166, and Cys-121/Cys-128. Asn-129 and Asn-141 each carry an N-linked (GlcNAc...) asparagine glycan.

Belongs to the pancreatic ribonuclease family.

The protein localises to the secreted. Its function is as follows. Does not exhibit any ribonuclease activity. In Macaca assamensis (Assam macaque), this protein is Inactive ribonuclease-like protein 9 (RNASE9).